Here is a 168-residue protein sequence, read N- to C-terminus: uncharacterized protein (168 aa).

Residues 24–44 (FIGIVLFLAVLIIGILILILF) form a helical membrane-spanning segment. Disordered regions lie at residues 69–92 (SPSS…NNSN) and 142–168 (NNNN…TKNI). Positions 142-157 (NNNNNNNNNPPTNISN) are enriched in low complexity.

It localises to the membrane. This is an uncharacterized protein from Dictyostelium discoideum (Social amoeba).